Reading from the N-terminus, the 670-residue chain is Kinesin-like protein KIF2B (670 aa).

Residue Thr122 is modified to Phosphothreonine; by PLK1. The stretch at 146–173 (CLQEIEKVQKQREKRRRLQQEIRARRAL) forms a coiled coil. Ser201 carries the post-translational modification Phosphoserine; by PLK1. Positions 210-540 (RICVCVRKRP…LRYANRVKEL (331 aa)) constitute a Kinesin motor domain. 300-307 (GQTGSGKT) serves as a coordination point for ATP.

This sequence belongs to the TRAFAC class myosin-kinesin ATPase superfamily. Kinesin family. MCAK/KIF2 subfamily. Phosphorylation at Thr-122 by PLK1 is required for activity in the correction of kinetochore-microtubules attachment errors, while phosphorylation at Ser-201 also by PLK1 is required for the kinetochore localization and activity in prometaphase.

It is found in the cytoplasm. It localises to the cytoskeleton. The protein localises to the microtubule organizing center. Its subcellular location is the centrosome. The protein resides in the spindle. It is found in the chromosome. It localises to the centromere. The protein localises to the kinetochore. Plus end-directed microtubule-dependent motor required for spindle assembly and chromosome movement during mitosis. Has microtubule depolymerization activity. Plays a role in chromosome congression. The chain is Kinesin-like protein KIF2B (KIF2B) from Macaca fascicularis (Crab-eating macaque).